The following is a 142-amino-acid chain: Small heat shock protein IbpB (142 aa).

In terms of domain architecture, sHSP spans 26–137 (AGEGQSFPPY…AAQRIAISER (112 aa)).

Belongs to the small heat shock protein (HSP20) family. Homodimer. Forms homomultimers of about 100-150 subunits at optimal growth temperatures. Conformation changes to oligomers at high temperatures or high ionic concentrations. The decrease in size of the multimers is accompanied by an increase in chaperone activity.

It is found in the cytoplasm. Functionally, associates with aggregated proteins, together with IbpA, to stabilize and protect them from irreversible denaturation and extensive proteolysis during heat shock and oxidative stress. Aggregated proteins bound to the IbpAB complex are more efficiently refolded and reactivated by the ATP-dependent chaperone systems ClpB and DnaK/DnaJ/GrpE. Its activity is ATP-independent. The sequence is that of Small heat shock protein IbpB from Shigella boydii serotype 18 (strain CDC 3083-94 / BS512).